The sequence spans 319 residues: tRNA (guanine(9)-N(1))-methyltransferase Trmt10A (319 aa).

Disordered regions lie at residues 16–87 and 275–319; these read LSLN…KRQL and AKIT…SLDS. A compositionally biased stretch (polar residues) spans 17–33; the sequence is SLNNCPGTTPGTPMSKN. Positions 35 to 42 match the Nuclear localization signal motif; sequence LKKQRKLA. Composition is skewed to basic and acidic residues over residues 40–58, 78–87, and 276–302; these read KLAEFAELRKLRREREREK, SRKELKKRQL, and KITDKKEPNHCLEQQDEKQKQEAESDK. A coiled-coil region spans residues 44–67; that stretch reads FAELRKLRREREREKKKQKRREAK. The region spanning 83-274 is the SAM-dependent MTase TRM10-type domain; that stretch reads KKRQLADGGK…ETIPMRKGAK (192 aa).

It belongs to the class IV-like SAM-binding methyltransferase superfamily. TRM10 family.

It localises to the nucleus. The protein localises to the nucleolus. It is found in the chromosome. It catalyses the reaction guanosine(9) in tRNA + S-adenosyl-L-methionine = N(1)-methylguanosine(9) in tRNA + S-adenosyl-L-homocysteine + H(+). Its function is as follows. S-adenosyl-L-methionine-dependent guanine N(1)-methyltransferase that catalyzes the formation of N(1)-methylguanine at position 9 (m1G9) in tRNAs. Modulates Mettl3-mediated N6-methyladenosine (m6A) methylation of mRNA 5'-UTRs and 3'-UTRs independent of its methyltransferase activity; influences mRNA stability and protein levels, in particular of Hsp70 chaperone proteins and other stress response proteins. Also regulates stability of transcripts encoding proteins involved in signaling processes and proteins involved in neurogenesis and axon guidance pathways. This is tRNA (guanine(9)-N(1))-methyltransferase Trmt10A from Drosophila melanogaster (Fruit fly).